A 267-amino-acid chain; its full sequence is Small ribosomal subunit protein uS2 (267 aa).

The disordered stretch occupies residues 224 to 267 (GRQGEDQVDEKTFEGQKSEAAEGDKKTADNSMEDIVNAVEGDNK). Residues 225-251 (RQGEDQVDEKTFEGQKSEAAEGDKKTA) are compositionally biased toward basic and acidic residues.

The protein belongs to the universal ribosomal protein uS2 family.

This chain is Small ribosomal subunit protein uS2, found in Levilactobacillus brevis (strain ATCC 367 / BCRC 12310 / CIP 105137 / JCM 1170 / LMG 11437 / NCIMB 947 / NCTC 947) (Lactobacillus brevis).